A 90-amino-acid chain; its full sequence is Probable Fe(2+)-trafficking protein (90 aa).

It belongs to the Fe(2+)-trafficking protein family.

In terms of biological role, could be a mediator in iron transactions between iron acquisition and iron-requiring processes, such as synthesis and/or repair of Fe-S clusters in biosynthetic enzymes. The protein is Probable Fe(2+)-trafficking protein of Paracidovorax citrulli (strain AAC00-1) (Acidovorax citrulli).